A 59-amino-acid chain; its full sequence is MANITVKLVRSRYGNTPKQRATLASLGLKKIRQERSFEKTDTLVGMIAKVQHLVEVTES.

This sequence belongs to the universal ribosomal protein uL30 family. As to quaternary structure, part of the 50S ribosomal subunit.

In Solidesulfovibrio magneticus (strain ATCC 700980 / DSM 13731 / RS-1) (Desulfovibrio magneticus), this protein is Large ribosomal subunit protein uL30.